Here is a 351-residue protein sequence, read N- to C-terminus: Auxin-responsive protein IAA27 (351 aa).

The tract at residues 1-37 (MMNLISFETPPLGRRSQDGGSSSSSITAATTTTNKAK) is disordered. Over residues 21–34 (SSSSSITAATTTTN) the composition is skewed to low complexity. A PB1 domain is found at 233-327 (NMFAKVHMDG…SAKRLYIAKN (95 aa)).

This sequence belongs to the Aux/IAA family. In terms of assembly, homodimers and heterodimers. In terms of tissue distribution, expressed in roots and seedlings.

The protein localises to the nucleus. Its function is as follows. Aux/IAA proteins are short-lived transcriptional factors that function as repressors of early auxin response genes at low auxin concentrations. The protein is Auxin-responsive protein IAA27 (IAA27) of Oryza sativa subsp. japonica (Rice).